The chain runs to 126 residues: Glycine cleavage system H protein (126 aa).

The region spanning 23–104 is the Lipoyl-binding domain; that stretch reads TLTVGITDHA…PYESWLFKIK (82 aa). Residue lysine 64 is modified to N6-lipoyllysine.

This sequence belongs to the GcvH family. The glycine cleavage system is composed of four proteins: P, T, L and H. (R)-lipoate is required as a cofactor.

Functionally, the glycine cleavage system catalyzes the degradation of glycine. The H protein shuttles the methylamine group of glycine from the P protein to the T protein. This is Glycine cleavage system H protein from Paraburkholderia xenovorans (strain LB400).